The primary structure comprises 515 residues: MGNCCPGSGDAEPASSDASTGNGSSSFKAGASPSSAPAQNKPPAPIGPVLGRPMEDVRSIYTIGKELGRGQFGVTSLCTHKATGQKFACKTIAKRKLSTKEDVEDVRREVQIMYHLAGQPNVVELKGAYEDKQSVHLVMELCAGGELFDRIIAKGHYTERAAASLLRTIVEIIHTCHSLGVIHRDLKPENFLLLSKDEDAPLKATDFGLSVFFKQGEVFKDIVGSAYYIAPEVLKRSYGPEADIWSVGVILYILLCGVPPFWAESEHGIFNSILRGQVDFTSDPWPRISASAKDLVRKMLNSDPKKRISAYEVLNHPWIKEDGEAPDTPLDNAVMNRLKQFRAMNQFKKAALRVIAGCLSEEEIRGLKEMFKSMDSDNSGTITVDELRKGLSKQGTKLTEAEVQQLMEAADADGNGTIDYDEFITATMHMNRMDREEHLYTAFQYFDKDNSGCISKEELEQALREKGLLDGRDIKDIISEVDADNDGRIDYSEFAAMMRKGNPEANPKKRRDVVI.

The disordered stretch occupies residues 1–51 (MGNCCPGSGDAEPASSDASTGNGSSSFKAGASPSSAPAQNKPPAPIGPVLG). G2 carries N-myristoyl glycine lipidation. Low complexity predominate over residues 14 to 38 (ASSDASTGNGSSSFKAGASPSSAPA). Positions 61–319 (YTIGKELGRG…AYEVLNHPWI (259 aa)) constitute a Protein kinase domain. Residues 67-75 (LGRGQFGVT) and K90 each bind ATP. The active-site Proton acceptor is the D185. An autoinhibitory domain region spans residues 325-355 (APDTPLDNAVMNRLKQFRAMNQFKKAALRVI). EF-hand domains follow at residues 362–397 (EEIRGLKEMFKSMDSDNSGTITVDELRKGLSKQGTK), 398–433 (LTEAEVQQLMEAADADGNGTIDYDEFITATMHMNRM), 434–469 (DREEHLYTAFQYFDKDNSGCISKEELEQALREKGLL), and 473–504 (DIKDIISEVDADNDGRIDYSEFAAMMRKGNPE). Ca(2+)-binding residues include D375, D377, S379, T381, E386, D411, D413, N415, T417, E422, D447, D449, S451, C453, E458, D482, D484, D486, R488, and E493.

Belongs to the protein kinase superfamily. Ser/Thr protein kinase family. CDPK subfamily. Expressed in heading panicles, spikelets and mature pollen grains.

The protein resides in the membrane. The catalysed reaction is L-seryl-[protein] + ATP = O-phospho-L-seryl-[protein] + ADP + H(+). The enzyme catalyses L-threonyl-[protein] + ATP = O-phospho-L-threonyl-[protein] + ADP + H(+). Activated by calcium. Autophosphorylation may play an important role in the regulation of the kinase activity. Functionally, may play a role in signal transduction pathways that involve calcium as a second messenger. In Oryza sativa subsp. japonica (Rice), this protein is Calcium-dependent protein kinase 2.